The sequence spans 259 residues: UPF0246 protein VSAL_I2547 (259 aa).

Belongs to the UPF0246 family.

The protein is UPF0246 protein VSAL_I2547 of Aliivibrio salmonicida (strain LFI1238) (Vibrio salmonicida (strain LFI1238)).